Here is a 296-residue protein sequence, read N- to C-terminus: Cytidine deaminase (296 aa).

CMP/dCMP-type deaminase domains follow at residues 47 to 167 (TEAE…FGPK) and 186 to 296 (DSSD…VDPV). Residue 88–90 (NLE) coordinates substrate. A Zn(2+)-binding site is contributed by H101. E103 serves as the catalytic Proton donor. Zn(2+) contacts are provided by C128 and C131.

This sequence belongs to the cytidine and deoxycytidylate deaminase family. Homodimer. Zn(2+) serves as cofactor.

It carries out the reaction cytidine + H2O + H(+) = uridine + NH4(+). It catalyses the reaction 2'-deoxycytidine + H2O + H(+) = 2'-deoxyuridine + NH4(+). Functionally, this enzyme scavenges exogenous and endogenous cytidine and 2'-deoxycytidine for UMP synthesis. This is Cytidine deaminase from Shewanella sp. (strain ANA-3).